The primary structure comprises 60 residues: Putative insect toxin Acra6 (60 aa).

Positions arginine 2–serine 60 constitute an LCN-type CS-alpha/beta domain. Intrachain disulfides connect cysteine 16-cysteine 37, cysteine 23-cysteine 44, and cysteine 27-cysteine 46.

It belongs to the long (4 C-C) scorpion toxin superfamily. Sodium channel inhibitor family. Beta subfamily. In terms of tissue distribution, expressed by the venom gland.

The protein resides in the secreted. In terms of biological role, depressant insect toxins cause a transient contraction paralysis followed by a slow flaccid paralysis. They bind voltage-independently to sodium channels (Nav) and block action potentials, primarily by depolarizing the axonal membrane and suppressing the sodium current. The protein is Putative insect toxin Acra6 of Androctonus crassicauda (Arabian fat-tailed scorpion).